Here is a 205-residue protein sequence, read N- to C-terminus: Dephospho-CoA kinase (205 aa).

The DPCK domain maps to 13–205 (RIGLTGGIAS…KWINTIREIL (193 aa)). 21-26 (ASGKST) contributes to the ATP binding site.

Belongs to the CoaE family.

It localises to the cytoplasm. It carries out the reaction 3'-dephospho-CoA + ATP = ADP + CoA + H(+). Its pathway is cofactor biosynthesis; coenzyme A biosynthesis; CoA from (R)-pantothenate: step 5/5. In terms of biological role, catalyzes the phosphorylation of the 3'-hydroxyl group of dephosphocoenzyme A to form coenzyme A. The polypeptide is Dephospho-CoA kinase (Prochlorococcus marinus (strain MIT 9312)).